A 121-amino-acid polypeptide reads, in one-letter code: UPF0102 protein BHWA1_02005 (121 aa).

It belongs to the UPF0102 family.

The polypeptide is UPF0102 protein BHWA1_02005 (Brachyspira hyodysenteriae (strain ATCC 49526 / WA1)).